The following is a 90-amino-acid chain: Sec-independent protein translocase protein TatA (90 aa).

The chain crosses the membrane as a helical span at residues 1–21 (MGISPWTLLIVLLIVLLVFGT). Basic and acidic residues-rich tracts occupy residues 42 to 59 (MKEGEEGAKEGEKSEPSK) and 70 to 90 (SGEGHTIEGERSEQPRDRHSS). The interval 42–90 (MKEGEEGAKEGEKSEPSKLEQPPEEEKESGEGHTIEGERSEQPRDRHSS) is disordered.

Belongs to the TatA/E family. As to quaternary structure, the Tat system comprises two distinct complexes: a TatABC complex, containing multiple copies of TatA, TatB and TatC subunits, and a separate TatA complex, containing only TatA subunits. Substrates initially bind to the TatABC complex, which probably triggers association of the separate TatA complex to form the active translocon.

It is found in the cell inner membrane. Part of the twin-arginine translocation (Tat) system that transports large folded proteins containing a characteristic twin-arginine motif in their signal peptide across membranes. TatA could form the protein-conducting channel of the Tat system. The chain is Sec-independent protein translocase protein TatA from Alkalilimnicola ehrlichii (strain ATCC BAA-1101 / DSM 17681 / MLHE-1).